A 537-amino-acid chain; its full sequence is Cytochrome P450 27C1 (537 aa).

Cys-483 provides a ligand contact to heme.

Belongs to the cytochrome P450 family. It depends on heme as a cofactor. As to expression, expressed in the dorsal third of retinal pigment epithelium, but not in the ventral counterpart (at protein level).

It is found in the membrane. It carries out the reaction all-trans-retinol + 2 reduced [adrenodoxin] + O2 + 2 H(+) = all-trans-3,4-didehydroretinol + 2 oxidized [adrenodoxin] + 2 H2O. Its function is as follows. Efficiently catalyzes the conversion of all-trans retinol (also called vitamin A1, the precursor of 11-cis retinal) to 3,4-didehydroretinol (also called vitamin A2, the precursor of 11-cis 3,4-didehydroretinal), also acts on all-trans retinal and all-trans retinoic acid. The replacement of 11-cis retinal chromophore in photopigments with 11-cis 3,4-didehydroretinal enhances sensitivity to long-wavelength light. This may improve vision in fresh water which is often turbid. The protein is Cytochrome P450 27C1 (cyp27c1) of Aquarana catesbeiana (American bullfrog).